The chain runs to 149 residues: Ribosome-binding factor A (149 aa).

Residues 125 to 149 (FGSADEVLNEDEGATDDTDDTKGKD) form a disordered region. Over residues 131-143 (VLNEDEGATDDTD) the composition is skewed to acidic residues.

The protein belongs to the RbfA family. In terms of assembly, monomer. Binds 30S ribosomal subunits, but not 50S ribosomal subunits or 70S ribosomes.

Its subcellular location is the cytoplasm. In terms of biological role, one of several proteins that assist in the late maturation steps of the functional core of the 30S ribosomal subunit. Associates with free 30S ribosomal subunits (but not with 30S subunits that are part of 70S ribosomes or polysomes). Required for efficient processing of 16S rRNA. May interact with the 5'-terminal helix region of 16S rRNA. The sequence is that of Ribosome-binding factor A from Shewanella sp. (strain W3-18-1).